The chain runs to 373 residues: Glutamine synthetase (373 aa).

Position 2 is an N-acetylthreonine (Thr2). The tract at residues 2–25 (TTSASSHLNKGIKQVYMSLPQGEK) is required for glutamine-induced ubiquitination by CRL4(CRBN) and proteasomal degradation. N6-acetyllysine; by EP300 occurs at positions 11 and 14. Residues 24 to 106 (EKVQAMYIWI…VLCEVFKYNR (83 aa)) form the GS beta-grasp domain. Residue Tyr104 is modified to Phosphotyrosine. Positions 113–373 (LRHTCKRIMD…TGDEPFQYKN (261 aa)) constitute a GS catalytic domain. Glu134 lines the ATP pocket. Mn(2+)-binding residues include Glu134, Glu136, Glu196, and Glu203. 203–208 (EFQIGP) serves as a coordination point for ATP. 246-247 (NW) is an L-glutamate binding site. His253 lines the Mn(2+) pocket. ATP is bound by residues 255–257 (NFS), Arg319, and Arg324. Arg319 contributes to the L-glutamate binding site. Residue 336–338 (YFE) coordinates ADP. A Mn(2+)-binding site is contributed by Glu338. Residue Arg340 participates in L-glutamate binding. Phosphoserine is present on Ser343.

The protein belongs to the glutamine synthetase family. In terms of assembly, decamer; composed of two pentamers. Interacts with PALMD. Interacts with RHOJ. Interacts with BEST2; this interaction tethers a fraction of GLUL to the membrane, causing a decrease of cytosolic glutamine synthase (GS) activity and inhibits the chloride channel activity of BEST2 by affecting the gating at the aperture in the absence of intracellular glutamate. Mg(2+) is required as a cofactor. The cofactor is Mn(2+). Acetylated by EP300/p300; acetylation is stimulated by increased glutamine levels and promotes ubiquitin-mediated proteasomal degradation. In terms of processing, palmitoylated; undergoes autopalmitoylation. Post-translationally, ubiquitinated by ZNRF1. Ubiquitinated by the DCX (DDB1-CUL4-X-box) E3 ubiquitin-protein ligase complex called CRL4(CRBN), leading to proteasomal degradation. Expressed in endothelial cells.

The protein resides in the cytoplasm. It is found in the cytosol. It localises to the microsome. The protein localises to the mitochondrion. Its subcellular location is the cell membrane. The catalysed reaction is L-glutamate + NH4(+) + ATP = L-glutamine + ADP + phosphate + H(+). It catalyses the reaction L-cysteinyl-[protein] + hexadecanoyl-CoA = S-hexadecanoyl-L-cysteinyl-[protein] + CoA. Glutamine synthetase activity is inhibited by methionine sulfoximine (MSO). Its function is as follows. Glutamine synthetase that catalyzes the ATP-dependent conversion of glutamate and ammonia to glutamine. Its role depends on tissue localization: in the brain, it regulates the levels of toxic ammonia and converts neurotoxic glutamate to harmless glutamine, whereas in the liver, it is one of the enzymes responsible for the removal of ammonia. Plays a key role in ammonium detoxification during erythropoiesis: the glutamine synthetase activity is required to remove ammonium generated by porphobilinogen deaminase (HMBS) during heme biosynthesis to prevent ammonium accumulation and oxidative stress. Essential for proliferation of fetal skin fibroblasts. Independently of its glutamine synthetase activity, required for endothelial cell migration during vascular development: acts by regulating membrane localization and activation of the GTPase RHOJ, possibly by promoting RHOJ palmitoylation. May act as a palmitoyltransferase for RHOJ: able to autopalmitoylate and then transfer the palmitoyl group to RHOJ. Plays a role in ribosomal 40S subunit biogenesis. Through the interaction with BEST2, inhibits BEST2 channel activity by affecting the gating at the aperture in the absence of intracellular L-glutamate, but sensitizes BEST2 to intracellular L-glutamate, which promotes the opening of BEST2 and thus relieves its inhibitory effect on BEST2. The protein is Glutamine synthetase of Homo sapiens (Human).